We begin with the raw amino-acid sequence, 945 residues long: Kinesin-like protein CIN8 (945 aa).

One can recognise a Kinesin motor domain in the interval asparagine 22–isoleucine 409. Glycine 114–threonine 121 serves as a coordination point for ATP. The segment at isoleucine 190 to glutamate 243 is disordered. Over residues serine 193–serine 208 the composition is skewed to low complexity. Residues methionine 234–glutamate 243 show a composition bias toward polar residues. 2 coiled-coil regions span residues methionine 450 to glutamate 562 and leucine 634 to glutamine 675.

This sequence belongs to the TRAFAC class myosin-kinesin ATPase superfamily. Kinesin family. BimC subfamily.

The protein resides in the cytoplasm. It localises to the cytoskeleton. It is found in the spindle. Its function is as follows. Elongates the mitotic spindle by interacting with spindle microtubules to generate an outward force pushing spindle poles apart. Following spindle assembly, CIN8 and KIP1 apparently act to oppose a force, possibly generated by KAR3, that draws separated poles back together. In Eremothecium gossypii (strain ATCC 10895 / CBS 109.51 / FGSC 9923 / NRRL Y-1056) (Yeast), this protein is Kinesin-like protein CIN8 (CIN8).